Here is a 275-residue protein sequence, read N- to C-terminus: Tryptophan synthase alpha chain (275 aa).

Residues Glu51 and Glu62 each act as proton acceptor in the active site.

The protein belongs to the TrpA family. In terms of assembly, tetramer of two alpha and two beta chains.

It carries out the reaction (1S,2R)-1-C-(indol-3-yl)glycerol 3-phosphate + L-serine = D-glyceraldehyde 3-phosphate + L-tryptophan + H2O. It participates in amino-acid biosynthesis; L-tryptophan biosynthesis; L-tryptophan from chorismate: step 5/5. In terms of biological role, the alpha subunit is responsible for the aldol cleavage of indoleglycerol phosphate to indole and glyceraldehyde 3-phosphate. The sequence is that of Tryptophan synthase alpha chain from Caulobacter sp. (strain K31).